The primary structure comprises 161 residues: Large ribosomal subunit protein bL17 (161 aa).

Residues 132 to 144 (ARAKRAEDNRKAL) show a composition bias toward basic and acidic residues. A disordered region spans residues 132-161 (ARAKRAEDNRKALEAQQAQAEAETTGETKA). The span at 145–161 (EAQQAQAEAETTGETKA) shows a compositional bias: low complexity.

It belongs to the bacterial ribosomal protein bL17 family. Part of the 50S ribosomal subunit. Contacts protein L32.

The polypeptide is Large ribosomal subunit protein bL17 (Koribacter versatilis (strain Ellin345)).